Here is a 141-residue protein sequence, read N- to C-terminus: Endoribonuclease YbeY (141 aa).

3 residues coordinate Zn(2+): H105, H109, and D115.

It belongs to the endoribonuclease YbeY family. Zn(2+) serves as cofactor.

It is found in the cytoplasm. Single strand-specific metallo-endoribonuclease involved in late-stage 70S ribosome quality control and in maturation of the 3' terminus of the 16S rRNA. The chain is Endoribonuclease YbeY from Karelsulcia muelleri (strain GWSS) (Sulcia muelleri).